Here is a 598-residue protein sequence, read N- to C-terminus: Cytochrome P450 monooxygenase phmB (598 aa).

The helical transmembrane segment at 107–127 (VAAKIAALLFVAGLFWAVSVL) threads the bilayer. N-linked (GlcNAc...) asparagine glycosylation is found at Asn-171, Asn-428, and Asn-494. Cys-542 provides a ligand contact to heme. N-linked (GlcNAc...) asparagine glycans are attached at residues Asn-549 and Asn-581.

This sequence belongs to the cytochrome P450 family. Heme is required as a cofactor.

The protein resides in the membrane. It participates in mycotoxin biosynthesis. Functionally, cytochrome P450 monooxygenase; part of the gene cluster that mediates the biosynthesis of the mycotoxins phomacins, leucine-derived cytochalasans with potent actin polymerization-inhibitory activities and monocot-specific antigerminative activities. The first step in the pathway is catalyzed by the hybrid PKS-NRPS phmA, assisted by the enoyl reductase phmE, that are responsible for fusion of the leucine precursor and the polyketide backbone to produce a 2-pyrrolidone intermediate. The polyketide synthase module (PKS) of phmA is responsible for the synthesis of the polyketide backbone and the downstream nonribosomal peptide synthetase (NRPS) amidates the carboxyl end of the polyketide with the leucine precursor. Because phmA lacks a designated enoylreductase (ER) domain, the required activity is provided the enoyl reductase phmE. Reduction by the hydrolyase phmG, followed by dehydration and intra-molecular Diels-Alder cyclization by the Diels-Alderase phmD then yield the required isoindolone-fused macrocycle. A number of oxidative steps catalyzed by the tailoring cytochrome P450 monooxygenase phmB, the FAD-linked oxidoreductase phmC and the short-chain dehydrogenase/reductase phmF, are further required to afford the final products, phomacin D and phomacin E. In Phaeosphaeria nodorum (strain SN15 / ATCC MYA-4574 / FGSC 10173) (Glume blotch fungus), this protein is Cytochrome P450 monooxygenase phmB.